The chain runs to 626 residues: (+)-3-carene synthase 1, chloroplastic (626 aa).

Residues 1–45 constitute a chloroplast transit peptide; it reads MSLISAVPLASSCVSKSLISSVREHKALRRAIATLQMSRPGKSVA. Asp-377, Asp-381, and Asp-529 together coordinate Mg(2+). A DDXXD motif motif is present at residues 377-381; it reads DDMYD.

Belongs to the terpene synthase family. Tpsd subfamily. Mg(2+) serves as cofactor. It depends on Mn(2+) as a cofactor.

It is found in the plastid. It localises to the chloroplast. The enzyme catalyses (2E)-geranyl diphosphate = (+)-car-3-ene + diphosphate. It catalyses the reaction (2E)-geranyl diphosphate = terpinolene + diphosphate. The protein operates within terpene metabolism; oleoresin biosynthesis. Its pathway is secondary metabolite biosynthesis; terpenoid biosynthesis. Its function is as follows. Monoterpene synthase (TPS) involved in the biosynthesis of monoterpene natural products included in conifer oleoresin secretions and volatile emissions; these compounds contribute to biotic and abiotic stress defense against herbivores and pathogens. Catalyzes the conversion of (2E)-geranyl diphosphate (GPP) to (+)-3-carene and, to a lower extent, to terpinolene. The protein is (+)-3-carene synthase 1, chloroplastic of Pinus banksiana (Jack pine).